The following is a 171-amino-acid chain: 3-hydroxydecanoyl-[acyl-carrier-protein] dehydratase (171 aa).

The active site involves histidine 70.

It belongs to the thioester dehydratase family. FabA subfamily. In terms of assembly, homodimer.

Its subcellular location is the cytoplasm. It carries out the reaction a (3R)-hydroxyacyl-[ACP] = a (2E)-enoyl-[ACP] + H2O. The catalysed reaction is (3R)-hydroxydecanoyl-[ACP] = (2E)-decenoyl-[ACP] + H2O. The enzyme catalyses (2E)-decenoyl-[ACP] = (3Z)-decenoyl-[ACP]. Its pathway is lipid metabolism; fatty acid biosynthesis. Necessary for the introduction of cis unsaturation into fatty acids. Catalyzes the dehydration of (3R)-3-hydroxydecanoyl-ACP to E-(2)-decenoyl-ACP and then its isomerization to Z-(3)-decenoyl-ACP. Can catalyze the dehydratase reaction for beta-hydroxyacyl-ACPs with saturated chain lengths up to 16:0, being most active on intermediate chain length. The protein is 3-hydroxydecanoyl-[acyl-carrier-protein] dehydratase of Stenotrophomonas maltophilia (strain R551-3).